The primary structure comprises 277 residues: MGIRTFRPYTPGTRQASVSDFSEITKTQPEKSLTTYKHSSQGRNNRGVVTSRHRGGGHKRLYRIIDFRRDKHNIPAKVAAIEYDPNRNARIALLYYQDGEKRYILAPADLKVGSTVISGEDAPFEIGNALPLWRIPLGSEVHNIELVAGRGGQMVRAAGASAQVVAKEGNYVTLRLPSKEVRMVRKECYATIGKVGNADVRNLKLGKAGRSRHRGKRPHVRGSVMNPVDHPHGGGEGRAPIGRPGPVTPWGKPALGAKTRNRKKASSKLIIRRRNQS.

Disordered stretches follow at residues 1–20 (MGIR…SVSD), 27–55 (TQPE…RHRG), and 207–277 (KAGR…RNQS). The segment covering 27–48 (TQPEKSLTTYKHSSQGRNNRGV) has biased composition (polar residues). Composition is skewed to basic residues over residues 207 to 220 (KAGR…RPHV) and 259 to 277 (TRNR…RNQS).

This sequence belongs to the universal ribosomal protein uL2 family. Part of the 50S ribosomal subunit. Forms a bridge to the 30S subunit in the 70S ribosome.

Its function is as follows. One of the primary rRNA binding proteins. Required for association of the 30S and 50S subunits to form the 70S ribosome, for tRNA binding and peptide bond formation. It has been suggested to have peptidyltransferase activity; this is somewhat controversial. Makes several contacts with the 16S rRNA in the 70S ribosome. The protein is Large ribosomal subunit protein uL2 of Gloeothece citriformis (strain PCC 7424) (Cyanothece sp. (strain PCC 7424)).